A 79-amino-acid polypeptide reads, in one-letter code: Conotoxin Vi6.9 (79 aa).

The signal sequence occupies residues 1–22; that stretch reads MKLTCMVIITVLFLTASQLITA. The propeptide occupies 23 to 47; that stretch reads DYSRDQRQYRAVRLGDEMRNFKGAR. 3 cysteine pairs are disulfide-bonded: Cys-49/Cys-62, Cys-56/Cys-67, and Cys-61/Cys-77. A 4-hydroxyproline mark is found at Pro-60 and Pro-63.

The protein belongs to the conotoxin O1 superfamily. In terms of tissue distribution, expressed by the venom duct.

Its subcellular location is the secreted. In terms of biological role, ion channel inhibitor that inhibits the increase in intracellular calcium upon depolarization in DRG neurons. In vivo, both intraperitoneal and intracranial injections into mice induce hyperactivity. The protein is Conotoxin Vi6.9 of Conus virgo (Virgin cone).